Here is a 321-residue protein sequence, read N- to C-terminus: MEPGMEMNTASEGGTRRGPENKHEEKVQDPNRGEAETKAEMGNKTWADLAGEMKTFLWNPEERTCMGRTAKSWGLILLFYFIFYTCLAGMFAFCMYVMLLTLSPYTPTYRDRVSPPGVMIRPYLNGFTIAFNVSKPSTWQPYVDSMHQFLAAYDDKVQEEKNIECISGQYFIQGGNDSEEKKACQFKRSLLQNCSGIEDPTFGFSKGQPCILLKMNRIIGYRPGAGVPVNVDCKVQKGNESDLRSVDFYPGNGTFDLMYYPYYGKLTHVNYTSPLVAMHFTDVKRNSLVHIQCKLNGKGIINDVNSDRFLGRIIFTLSIGK.

Positions 1–41 are disordered; that stretch reads MEPGMEMNTASEGGTRRGPENKHEEKVQDPNRGEAETKAEM. At 1–72 the chain is on the cytoplasmic side; sequence MEPGMEMNTA…RTCMGRTAKS (72 aa). Over residues 14-41 the composition is skewed to basic and acidic residues; the sequence is GTRRGPENKHEEKVQDPNRGEAETKAEM. The helical transmembrane segment at 73 to 93 threads the bilayer; that stretch reads WGLILLFYFIFYTCLAGMFAF. Residues 94 to 321 are Extracellular-facing; sequence CMYVMLLTLS…RIIFTLSIGK (228 aa). Asparagine 132, asparagine 176, and asparagine 193 each carry an N-linked (GlcNAc...) asparagine glycan. Cysteine 165 and cysteine 184 are oxidised to a cystine. Cystine bridges form between cysteine 194–cysteine 210 and cysteine 233–cysteine 293. N-linked (GlcNAc...) asparagine glycosylation is found at asparagine 239, asparagine 252, and asparagine 270.

It belongs to the X(+)/potassium ATPases subunit beta family. Composed of two subunits: alpha (catalytic) and beta (accessory). Glycosylated. Expressed in skeletal muscle, intestine, heart, brain, retina, inner ear and skin.

Its subcellular location is the membrane. Functionally, this is the non-catalytic component of the active enzyme, which catalyzes the hydrolysis of ATP coupled with the exchange of Na(+) and K(+) ions across the plasma membrane. This chain is Protein ATP1B4 (ATP1B4), found in Gallus gallus (Chicken).